Consider the following 253-residue polypeptide: PAXIP1-associated glutamate-rich protein 1 (253 aa).

Disordered stretches follow at residues 1-109 (MSLV…MPPP) and 128-253 (QAEI…QRKY). Basic and acidic residues predominate over residues 51-62 (EGGREEAEHEGS). The sufficient for interaction with NCOA1 stretch occupies residues 116–160 (YELLAAHGTLELQAEILPRRPPTPEAQSEEERSDEEPEAKEEEEE). A Phosphothreonine modification is found at Thr-138. Residues 142-159 (QSEEERSDEEPEAKEEEE) are compositionally biased toward acidic residues. Ser-143 and Ser-148 each carry phosphoserine. A sufficient for interaction with ESR1 region spans residues 161 to 253 (KPHMPTEFDF…GSLFPRQRKY (93 aa)). A compositionally biased stretch (basic and acidic residues) spans 195 to 223 (QKREARLDKVLSDMKRHKKLEEQILRTGR). Ser-237 carries the phosphoserine modification.

In terms of assembly, component of the KMT2 family MLL2/MLL3 complex, at least composed of the histone methyltransferases KMT2D and/or KMT2C, the common complex subunits ASH2L, RBBP5, WDR5 and DPY30, and the complex type-specific subunits PAXIP1/PTIP, PAGR1, NCOA6 and KDM6A; PAXIP1 is required for the association with the MLL2/MLL3 complex. Forms a constitutive complex with PAXIP1/PTIP independently of the MLL2/MLL3 complex. Interacts with NCOA1, ESR1, NR3C1, AR.

It localises to the nucleus. Its function is as follows. Its association with the histone methyltransferase MLL2/MLL3 complex is suggesting a role in epigenetic transcriptional activation. However, in association with PAXIP1/PTIP is proposed to function at least in part independently of the MLL2/MLL3 complex. Proposed to be recruited by PAXIP1 to sites of DNA damage where the PAGR1:PAXIP1 complex is required for cell survival in response to DNA damage independently of the MLL2/MLL3 complex. However, its function in DNA damage has been questioned. During immunoglobulin class switching in activated B-cells is involved in transcription regulation of downstream switch regions at the immunoglobulin heavy-chain (Igh) locus independently of the MLL2/MLL3 complex. Involved in both estrogen receptor-regulated gene transcription and estrogen-stimulated G1/S cell-cycle transition. Acts as a transcriptional cofactor for nuclear hormone receptors. Inhibits the induction properties of several steroid receptors such as NR3C1, AR and PPARG; the mechanism of inhibition appears to be gene-dependent. In Bos taurus (Bovine), this protein is PAXIP1-associated glutamate-rich protein 1 (PAGR1).